Here is a 402-residue protein sequence, read N- to C-terminus: Arginine deiminase (402 aa).

Cys-391 functions as the Amidino-cysteine intermediate in the catalytic mechanism.

Belongs to the arginine deiminase family.

It is found in the cytoplasm. It catalyses the reaction L-arginine + H2O = L-citrulline + NH4(+). The protein operates within amino-acid degradation; L-arginine degradation via ADI pathway; carbamoyl phosphate from L-arginine: step 1/2. In Mycobacterium marinum (strain ATCC BAA-535 / M), this protein is Arginine deiminase.